The following is a 216-amino-acid chain: Deoxyribose-phosphate aldolase (216 aa).

Residue aspartate 89 is the Proton donor/acceptor of the active site. Lysine 153 functions as the Schiff-base intermediate with acetaldehyde in the catalytic mechanism. Catalysis depends on lysine 182, which acts as the Proton donor/acceptor.

This sequence belongs to the DeoC/FbaB aldolase family. DeoC type 1 subfamily.

The protein localises to the cytoplasm. The catalysed reaction is 2-deoxy-D-ribose 5-phosphate = D-glyceraldehyde 3-phosphate + acetaldehyde. Its pathway is carbohydrate degradation; 2-deoxy-D-ribose 1-phosphate degradation; D-glyceraldehyde 3-phosphate and acetaldehyde from 2-deoxy-alpha-D-ribose 1-phosphate: step 2/2. Functionally, catalyzes a reversible aldol reaction between acetaldehyde and D-glyceraldehyde 3-phosphate to generate 2-deoxy-D-ribose 5-phosphate. The chain is Deoxyribose-phosphate aldolase from Treponema denticola (strain ATCC 35405 / DSM 14222 / CIP 103919 / JCM 8153 / KCTC 15104).